Consider the following 689-residue polypeptide: Glycine--tRNA ligase beta subunit (689 aa).

The protein belongs to the class-II aminoacyl-tRNA synthetase family. Tetramer of two alpha and two beta subunits.

It localises to the cytoplasm. The catalysed reaction is tRNA(Gly) + glycine + ATP = glycyl-tRNA(Gly) + AMP + diphosphate. This chain is Glycine--tRNA ligase beta subunit, found in Klebsiella pneumoniae (strain 342).